The sequence spans 383 residues: tRNA-specific 2-thiouridylase MnmA (383 aa).

ATP-binding positions include 10 to 17 (AMSGGVDS) and M36. The Nucleophile role is filled by C107. Residues C107 and C206 are joined by a disulfide bond. G131 contacts ATP. Residues 155 to 157 (KDQ) form an interaction with tRNA region. The Cysteine persulfide intermediate role is filled by C206. Positions 315 to 316 (RY) are interaction with tRNA.

This sequence belongs to the MnmA/TRMU family.

The protein resides in the cytoplasm. It carries out the reaction S-sulfanyl-L-cysteinyl-[protein] + uridine(34) in tRNA + AH2 + ATP = 2-thiouridine(34) in tRNA + L-cysteinyl-[protein] + A + AMP + diphosphate + H(+). In terms of biological role, catalyzes the 2-thiolation of uridine at the wobble position (U34) of tRNA, leading to the formation of s(2)U34. In Salinibacter ruber (strain DSM 13855 / M31), this protein is tRNA-specific 2-thiouridylase MnmA.